Reading from the N-terminus, the 492-residue chain is MTLWINGDWITGQGERRRKTNPVSAEILWQGNDANAAQVAEACQAARAAFPRWARQPFTARQAIVEKFAVLLEAHKADLTEVIARETGKPRWEAATEVTAMINKIAISIKAYHARTGEQKSELVDGAATLRHRPHGVLAVFGPYNFPGHLPNGHIVPALLAGNTLIFKPSELTPWTGETVIKLWERAGLPAGVLNLVQGGRETGQALSSLDDLDGLLFTGSASTGYQLHRQLSGQPEKILALEMGGNNPLIIEDVTNMDAAVHLTLQSAFITAGQRCTCARRLLVKQGAQGDAFLARLVDVAGRLQPGRWDDDPQPFIGGLISAQAAQHVMEAWRQREALGGRTLLAPRKVKEGTSLLTPGIIELTGVTDVPDEEVFGPLLNVWRYAHFDEAIRLANNTRFGLSCGLVSTDRAQFEQLLLEARAGIVNWNKPLTGAASTAPFGGVGASGNHRPSAWYAADYCAWPMASLESPELTLPATLSPGLDFSRREAV.

220 to 225 is a binding site for NAD(+); the sequence is GSASTG. Active-site residues include E243 and C277.

Belongs to the aldehyde dehydrogenase family. AstD subfamily.

The catalysed reaction is N-succinyl-L-glutamate 5-semialdehyde + NAD(+) + H2O = N-succinyl-L-glutamate + NADH + 2 H(+). It participates in amino-acid degradation; L-arginine degradation via AST pathway; L-glutamate and succinate from L-arginine: step 4/5. Its function is as follows. Catalyzes the NAD-dependent reduction of succinylglutamate semialdehyde into succinylglutamate. The chain is N-succinylglutamate 5-semialdehyde dehydrogenase from Salmonella paratyphi C (strain RKS4594).